A 651-amino-acid polypeptide reads, in one-letter code: DNA mismatch repair protein MutL (651 aa).

The segment at 383–405 (TAAEEPTPAPTSPDLEIGDLDDQ) is disordered.

It belongs to the DNA mismatch repair MutL/HexB family.

Its function is as follows. This protein is involved in the repair of mismatches in DNA. It is required for dam-dependent methyl-directed DNA mismatch repair. May act as a 'molecular matchmaker', a protein that promotes the formation of a stable complex between two or more DNA-binding proteins in an ATP-dependent manner without itself being part of a final effector complex. This chain is DNA mismatch repair protein MutL, found in Lacticaseibacillus paracasei (strain ATCC 334 / BCRC 17002 / CCUG 31169 / CIP 107868 / KCTC 3260 / NRRL B-441) (Lactobacillus paracasei).